A 161-amino-acid chain; its full sequence is MLTHLDSQGRANMVDVTDKAVTSREAVAEAVVRMLPTTLQMIVSGGHPKGDVFAVARIAGIQAAKKTSDLIPLCHPLMLTSIKVHLAADGDDAVRITASCKLAGQTGVEMEALTAASIAALTIYDMCKAVDRGMVIESVRLLEKLGGKSGHFIADQAQVSS.

Substrate contacts are provided by residues 73-75 (LCH) and 110-111 (ME). Residue aspartate 125 is part of the active site.

This sequence belongs to the MoaC family. Homohexamer; trimer of dimers.

It carries out the reaction (8S)-3',8-cyclo-7,8-dihydroguanosine 5'-triphosphate = cyclic pyranopterin phosphate + diphosphate. The protein operates within cofactor biosynthesis; molybdopterin biosynthesis. In terms of biological role, catalyzes the conversion of (8S)-3',8-cyclo-7,8-dihydroguanosine 5'-triphosphate to cyclic pyranopterin monophosphate (cPMP). This Pseudomonas savastanoi pv. phaseolicola (strain 1448A / Race 6) (Pseudomonas syringae pv. phaseolicola (strain 1448A / Race 6)) protein is Cyclic pyranopterin monophosphate synthase.